Reading from the N-terminus, the 164-residue chain is MGKRSQKSSVLMVCVGNLCRSPIAEAVMRDLVARAGLQGEWHVESAGIEDWHSGHQPDERALNVLARHNIEYNGKARVLAPEDFLEFDYIFAMDLSNLAALRRMAPKGTTAKLLILGNFGLKPDERIIEDPYYDIGEASFEEIYRQCSIACRNFLKQARLKQIM.

The active-site Nucleophile is Cys-14. The active site involves Arg-20. Catalysis depends on Asp-130, which acts as the Proton donor.

This sequence belongs to the low molecular weight phosphotyrosine protein phosphatase family. As to expression, cone cells and primary pigment cells in developing pupal retina.

The protein localises to the cytoplasm. The enzyme catalyses O-phospho-L-tyrosyl-[protein] + H2O = L-tyrosyl-[protein] + phosphate. It carries out the reaction a phosphate monoester + H2O = an alcohol + phosphate. In terms of biological role, catalyzes the dephosphorylation of tyrosine phosphorylated proteins and low-MW aryl phosphates. Can contribute to the regulation of a variety of developmental processes. This Drosophila melanogaster (Fruit fly) protein is Low molecular weight phosphotyrosine protein phosphatase 2 (primo-2).